The following is a 336-amino-acid chain: Holliday junction branch migration complex subunit RuvB (336 aa).

A large ATPase domain (RuvB-L) region spans residues 4-185 (ADRLISADIQ…FGIVQRLEFY (182 aa)). Residues I24, R25, G66, K69, T70, T71, 132 to 134 (EDY), R175, Y185, and R222 each bind ATP. A Mg(2+)-binding site is contributed by T70. Residues 186–256 (NVDDLQHIVA…IASKALDMLN (71 aa)) are small ATPAse domain (RuvB-S). The interval 259-336 (AAGFDYLDRK…RHFNRIMEAP (78 aa)) is head domain (RuvB-H). 3 residues coordinate DNA: R295, R314, and R319.

It belongs to the RuvB family. In terms of assembly, homohexamer. Forms an RuvA(8)-RuvB(12)-Holliday junction (HJ) complex. HJ DNA is sandwiched between 2 RuvA tetramers; dsDNA enters through RuvA and exits via RuvB. An RuvB hexamer assembles on each DNA strand where it exits the tetramer. Each RuvB hexamer is contacted by two RuvA subunits (via domain III) on 2 adjacent RuvB subunits; this complex drives branch migration. In the full resolvosome a probable DNA-RuvA(4)-RuvB(12)-RuvC(2) complex forms which resolves the HJ.

The protein resides in the cytoplasm. It carries out the reaction ATP + H2O = ADP + phosphate + H(+). The RuvA-RuvB-RuvC complex processes Holliday junction (HJ) DNA during genetic recombination and DNA repair, while the RuvA-RuvB complex plays an important role in the rescue of blocked DNA replication forks via replication fork reversal (RFR). RuvA specifically binds to HJ cruciform DNA, conferring on it an open structure. The RuvB hexamer acts as an ATP-dependent pump, pulling dsDNA into and through the RuvAB complex. RuvB forms 2 homohexamers on either side of HJ DNA bound by 1 or 2 RuvA tetramers; 4 subunits per hexamer contact DNA at a time. Coordinated motions by a converter formed by DNA-disengaged RuvB subunits stimulates ATP hydrolysis and nucleotide exchange. Immobilization of the converter enables RuvB to convert the ATP-contained energy into a lever motion, pulling 2 nucleotides of DNA out of the RuvA tetramer per ATP hydrolyzed, thus driving DNA branch migration. The RuvB motors rotate together with the DNA substrate, which together with the progressing nucleotide cycle form the mechanistic basis for DNA recombination by continuous HJ branch migration. Branch migration allows RuvC to scan DNA until it finds its consensus sequence, where it cleaves and resolves cruciform DNA. This Proteus mirabilis (strain HI4320) protein is Holliday junction branch migration complex subunit RuvB.